An 807-amino-acid polypeptide reads, in one-letter code: Lysyl oxidase homolog 3B (807 aa).

Positions 1 to 24 are cleaved as a signal peptide; it reads MELHQWCRHIIVFLLNVWIPSCFA. 5 SRCR domains span residues 49–150, 175–288, 309–409, 419–470, and 476–579; these read FRLS…VICK, VRLR…VSCV, TRLK…VRCN, VRIL…LGYA, and VRLS…VICS. 9 disulfides stabilise this stretch: Cys75/Cys139, Cys88/Cys149, Cys119/Cys129, Cys207/Cys277, Cys220/Cys287, Cys254/Cys264, Cys334/Cys398, Cys347/Cys408, and Cys378/Cys388. N-linked (GlcNAc...) asparagine glycosylation occurs at Asn272. An N-linked (GlcNAc...) asparagine glycan is attached at Asn392. Cystine bridges form between Cys514–Cys578 and Cys547–Cys557. The N-linked (GlcNAc...) asparagine glycan is linked to Asn536. Asn679 carries N-linked (GlcNAc...) asparagine glycosylation. The lysine tyrosylquinone (Lys-Tyr) cross-link spans 688–724; it reads KASFCLEDTDCDEGVSKRYKCANFGEQGITVGCWDLY. Tyr724 carries the 2',4',5'-topaquinone modification.

Belongs to the lysyl oxidase family. Cu cation serves as cofactor. It depends on lysine tyrosylquinone residue as a cofactor. Post-translationally, the lysine tyrosylquinone cross-link (LTQ) is generated by condensation of the epsilon-amino group of a lysine with a topaquinone produced by oxidation of tyrosine.

The protein localises to the secreted. Its subcellular location is the extracellular space. It is found in the cytoplasm. The protein resides in the nucleus. It catalyses the reaction L-lysyl-[protein] + O2 + H2O = (S)-2-amino-6-oxohexanoyl-[protein] + H2O2 + NH4(+). It carries out the reaction N(6)-acetyl-L-lysyl-[protein] + O2 + H2O = acetamide + (S)-2-amino-6-oxohexanoyl-[protein] + H2O2. Its function is as follows. Protein-lysine 6-oxidase that mediates the oxidation of peptidyl lysine residues to allysine in target proteins. Catalyzes the post-translational oxidative deamination of peptidyl lysine residues in precursors of elastin and different types of collagens, a prerequisite in the formation of cross-links between collagens and elastin. Can mediate oxidation of lysine residues that are acetylated. Also able to catalyze deacetylation of lysine residues. Required for maturation of neural crest derived cartilage elements. The polypeptide is Lysyl oxidase homolog 3B (Danio rerio (Zebrafish)).